A 424-amino-acid polypeptide reads, in one-letter code: UPF0597 protein Sputcn32_1209 (424 aa).

This sequence belongs to the UPF0597 family.

This Shewanella putrefaciens (strain CN-32 / ATCC BAA-453) protein is UPF0597 protein Sputcn32_1209.